The primary structure comprises 78 residues: Large ribosomal subunit protein bL28 (78 aa).

The segment at 1 to 21 is disordered; the sequence is MSRVCQVTGKSPITGNNVSHA. Over residues 8–21 the composition is skewed to polar residues; sequence TGKSPITGNNVSHA.

This sequence belongs to the bacterial ribosomal protein bL28 family.

The sequence is that of Large ribosomal subunit protein bL28 from Hahella chejuensis (strain KCTC 2396).